The primary structure comprises 313 residues: Protein FixB (313 aa).

FAD is bound at residue 255 to 283; sequence LYLAVGISGQIQHMVGANASQTIFAINKD.

This sequence belongs to the ETF alpha-subunit/FixB family. Heterodimer of FixA and FixB.

It participates in amine and polyamine metabolism; carnitine metabolism. In terms of biological role, required for anaerobic carnitine reduction. May bring reductant to CaiA. This Escherichia coli O6:K15:H31 (strain 536 / UPEC) protein is Protein FixB.